The primary structure comprises 450 residues: Benzene 1,2-dioxygenase subunit alpha (450 aa).

Residues Trp54–Ala163 form the Rieske domain. [2Fe-2S] cluster-binding residues include Cys96, His98, Cys116, and His119. His222 and His228 together coordinate Fe cation.

This sequence belongs to the bacterial ring-hydroxylating dioxygenase alpha subunit family. This dioxygenase system consists of four proteins: the two subunits of the hydroxylase component (BnzA and BnzB), a ferredoxin (BnzC) and a ferredoxin reductase (BnzD). The cofactor is [2Fe-2S] cluster. Fe cation is required as a cofactor.

The enzyme catalyses benzene + NADH + O2 + H(+) = cis-1,2-dihydrobenzene-1,2-diol + NAD(+). It carries out the reaction toluene + NADH + O2 + H(+) = (1S,2R)-3-methylcyclohexa-3,5-diene-1,2-diol + NAD(+). The protein operates within aromatic compound metabolism; benzene degradation; catechol from benzene: step 1/2. It functions in the pathway xenobiotic degradation; toluene degradation. It participates in xenobiotic degradation; xylene degradation. Functionally, catalyzes both the oxidation of benzene and toluene. This Pseudomonas putida (strain ATCC 700007 / DSM 6899 / JCM 31910 / BCRC 17059 / LMG 24140 / F1) protein is Benzene 1,2-dioxygenase subunit alpha (bnzA).